The chain runs to 67 residues: UPF0434 protein Bphy_0537 (67 aa).

The protein belongs to the UPF0434 family.

The protein is UPF0434 protein Bphy_0537 of Paraburkholderia phymatum (strain DSM 17167 / CIP 108236 / LMG 21445 / STM815) (Burkholderia phymatum).